Consider the following 262-residue polypeptide: tRNA pseudouridine synthase B (262 aa).

Aspartate 77 acts as the Nucleophile in catalysis.

This sequence belongs to the pseudouridine synthase TruB family. Type 1 subfamily.

The catalysed reaction is uridine(55) in tRNA = pseudouridine(55) in tRNA. Its function is as follows. Responsible for synthesis of pseudouridine from uracil-55 in the psi GC loop of transfer RNAs. This chain is tRNA pseudouridine synthase B, found in Protochlamydia amoebophila (strain UWE25).